Consider the following 299-residue polypeptide: tRNA dimethylallyltransferase (299 aa).

Residue 13 to 20 coordinates ATP; sequence GPTASGKT. Residue 15–20 participates in substrate binding; sequence TASGKT. The tract at residues 38 to 41 is interaction with substrate tRNA; it reads DSRQ.

This sequence belongs to the IPP transferase family. As to quaternary structure, monomer. Requires Mg(2+) as cofactor.

The enzyme catalyses adenosine(37) in tRNA + dimethylallyl diphosphate = N(6)-dimethylallyladenosine(37) in tRNA + diphosphate. In terms of biological role, catalyzes the transfer of a dimethylallyl group onto the adenine at position 37 in tRNAs that read codons beginning with uridine, leading to the formation of N6-(dimethylallyl)adenosine (i(6)A). In Parasynechococcus marenigrum (strain WH8102), this protein is tRNA dimethylallyltransferase.